We begin with the raw amino-acid sequence, 150 residues long: Large ribosomal subunit protein bL9 (150 aa).

It belongs to the bacterial ribosomal protein bL9 family.

Its function is as follows. Binds to the 23S rRNA. This is Large ribosomal subunit protein bL9 from Ruthia magnifica subsp. Calyptogena magnifica.